The primary structure comprises 337 residues: Cytochrome P450 monooxygenase dpmpJ (337 aa).

Residues 4–24 (LILHHPYASLAAGILLYFFCL) form a helical membrane-spanning segment. N158 is a glycosylation site (N-linked (GlcNAc...) asparagine).

It belongs to the cytochrome P450 family. It depends on heme as a cofactor.

The protein localises to the membrane. The protein operates within secondary metabolite biosynthesis; terpenoid biosynthesis. Functionally, cytochrome P450 monooxygenase; part of the gene cluster that mediates the biosynthesis of diterpenoid pyrones. The first step of the pathway is the synthesis of the alpha-pyrone moiety by the polyketide synthase dpmpA via condensation of one acetyl-CoA starter unit with 3 malonyl-CoA units and 2 methylations. The alpha-pyrone is then combined with geranylgeranyl pyrophosphate (GGPP) formed by the GGPP synthase dpmpD through the action of the prenyltransferase dpmpC to yield a linear alpha-pyrone diterpenoid. Subsequent steps in the diterpenoid pyrone biosynthetic pathway involve the decalin core formation, which is initiated by the epoxidation of the C10-C11 olefin by the FAD-dependent oxidoreductase dpmpE, and is followed by a cyclization cascade catalyzed by the terpene cyclase dpmpB. The short chain dehydrogenase/reductase dpmpG then oxidizes the 8S hydroxy group to a ketone and the short chain dehydrogenase/reductase dpmpH reduces the ketone to the 8R hydroxy group to yield higginsianin B. Higginsianin B is further methylated by the methyltransferase dpmpI to produce the intermediate named FDDP B. The cytochrome P450 monooxygenase dpmpJ then oxidizes the C-26 methyl to primary alcohol, producing the final diterpenoid pyrone with a C-26 primary alcohol on the gamma-pyrone moiety named FDDP C. The sequence is that of Cytochrome P450 monooxygenase dpmpJ from Macrophomina phaseolina (strain MS6) (Charcoal rot fungus).